Reading from the N-terminus, the 552-residue chain is Segmentation polarity homeobox protein engrailed (552 aa).

Over residues 93–108 (SGSGSPASCSTPASST) the composition is skewed to low complexity. Disordered regions lie at residues 93–112 (SGSG…PLTI), 130–171 (THTT…TAKP), 309–419 (PAAP…GGKN), and 433–460 (DRPS…PRTA). The span at 135–151 (EEEEAEEDDDIDVDVDD) shows a compositional bias: acidic residues. The segment covering 317–382 (PPLSSSASSL…SGSGVNASSP (66 aa)) has biased composition (low complexity). Positions 446–457 (QPKDKTNDEKRP) are enriched in basic and acidic residues. Residues 454–513 (EKRPRTAFSSEQLARLKREFNENRYLTERRRQQLSSELGLNEAQIKIWFQNKRAKIKKST) constitute a DNA-binding region (homeobox).

The protein belongs to the engrailed homeobox family. Post-translationally, phosphorylated. Phosphorylation may directly or allosterically modify its function.

It localises to the nucleus. In terms of biological role, this protein specifies the body segmentation pattern. It is required for the development of the central nervous system. Transcriptional regulator that represses activated promoters. Wg signaling operates by inactivating the SGG repression of EN autoactivation. The protein is Segmentation polarity homeobox protein engrailed (en) of Drosophila melanogaster (Fruit fly).